Consider the following 410-residue polypeptide: Putative competence-damage inducible protein (410 aa).

The protein belongs to the CinA family.

This Finegoldia magna (strain ATCC 29328 / DSM 20472 / WAL 2508) (Peptostreptococcus magnus) protein is Putative competence-damage inducible protein.